The following is a 500-amino-acid chain: Glucosylglycerol-phosphate synthase (500 aa).

Belongs to the glycosyltransferase 20 family.

It carries out the reaction ADP-alpha-D-glucose + sn-glycerol 3-phosphate = 2-O-(alpha-D-glucopyranosyl)-sn-glycerol 3-phosphate + ADP + H(+). The protein operates within glycan metabolism; glucosylglycerol biosynthesis. In terms of biological role, involved in salt tolerance by producing GG-phosphate from ADP-glucose and glycerol-3-phosphate (G3P), an intermediate in the synthesis of the osmolyte glucosylglycerol (GG). The chain is Glucosylglycerol-phosphate synthase (ggpS) from Picosynechococcus sp. (strain ATCC 27264 / PCC 7002 / PR-6) (Agmenellum quadruplicatum).